The sequence spans 561 residues: Arginine--tRNA ligase (561 aa).

The short motif at 129 to 139 (ANPTGPLHVGH) is the 'HIGH' region element.

This sequence belongs to the class-I aminoacyl-tRNA synthetase family. In terms of assembly, monomer.

It is found in the cytoplasm. The enzyme catalyses tRNA(Arg) + L-arginine + ATP = L-arginyl-tRNA(Arg) + AMP + diphosphate. The protein is Arginine--tRNA ligase of Bordetella parapertussis (strain 12822 / ATCC BAA-587 / NCTC 13253).